Here is a 548-residue protein sequence, read N- to C-terminus: Peptide chain release factor 3 (548 aa).

The tr-type G domain maps to 23–290 (ERRRTFGIIS…ALLDWAPPPQ (268 aa)). GTP is bound by residues 32 to 39 (SHPDAGKT), 100 to 104 (DTPGH), and 154 to 157 (NKMD).

The protein belongs to the TRAFAC class translation factor GTPase superfamily. Classic translation factor GTPase family. PrfC subfamily.

It localises to the cytoplasm. In terms of biological role, increases the formation of ribosomal termination complexes and stimulates activities of RF-1 and RF-2. It binds guanine nucleotides and has strong preference for UGA stop codons. It may interact directly with the ribosome. The stimulation of RF-1 and RF-2 is significantly reduced by GTP and GDP, but not by GMP. The chain is Peptide chain release factor 3 from Aromatoleum aromaticum (strain DSM 19018 / LMG 30748 / EbN1) (Azoarcus sp. (strain EbN1)).